A 256-amino-acid polypeptide reads, in one-letter code: Phosphoribosylaminoimidazole-succinocarboxamide synthase (256 aa).

The tract at residues 234-256 (KPQKPAAAKKKAPVSKKTVKRTR) is disordered. Residues 240–256 (AAKKKAPVSKKTVKRTR) show a composition bias toward basic residues.

Belongs to the SAICAR synthetase family.

The enzyme catalyses 5-amino-1-(5-phospho-D-ribosyl)imidazole-4-carboxylate + L-aspartate + ATP = (2S)-2-[5-amino-1-(5-phospho-beta-D-ribosyl)imidazole-4-carboxamido]succinate + ADP + phosphate + 2 H(+). It functions in the pathway purine metabolism; IMP biosynthesis via de novo pathway; 5-amino-1-(5-phospho-D-ribosyl)imidazole-4-carboxamide from 5-amino-1-(5-phospho-D-ribosyl)imidazole-4-carboxylate: step 1/2. This chain is Phosphoribosylaminoimidazole-succinocarboxamide synthase, found in Methanoregula boonei (strain DSM 21154 / JCM 14090 / 6A8).